Here is a 304-residue protein sequence, read N- to C-terminus: Tetrahydromethanopterin S-methyltransferase subunit E (304 aa).

Transmembrane regions (helical) follow at residues 3–23 (PLIGMGVLALIGVAATIAGAS), 86–106 (PLFALVLGALIAACVHGTFAV), 131–151 (HTPVIMGYSFITTFCILVVSY), 152–172 (LMTVVLGHPFPLTMLAFIWGI), 233–253 (PVTGMAFGMTVFLGSWVTTVF), and 263–283 (WISVVAGVIIVLILIFWNWKI).

The protein belongs to the MtrE family. The complex is composed of 8 subunits; MtrA, MtrB, MtrC, MtrD, MtrE, MtrF, MtrG and MtrH.

Its subcellular location is the cell membrane. It catalyses the reaction 5-methyl-5,6,7,8-tetrahydromethanopterin + coenzyme M + 2 Na(+)(in) = 5,6,7,8-tetrahydromethanopterin + methyl-coenzyme M + 2 Na(+)(out). The protein operates within one-carbon metabolism; methanogenesis from CO(2); methyl-coenzyme M from 5,10-methylene-5,6,7,8-tetrahydromethanopterin: step 2/2. Part of a complex that catalyzes the formation of methyl-coenzyme M and tetrahydromethanopterin from coenzyme M and methyl-tetrahydromethanopterin. This is an energy-conserving, sodium-ion translocating step. The chain is Tetrahydromethanopterin S-methyltransferase subunit E from Methanosarcina acetivorans (strain ATCC 35395 / DSM 2834 / JCM 12185 / C2A).